A 283-amino-acid polypeptide reads, in one-letter code: 2-dehydro-3-deoxyphosphooctonate aldolase (283 aa).

This sequence belongs to the KdsA family.

It localises to the cytoplasm. The catalysed reaction is D-arabinose 5-phosphate + phosphoenolpyruvate + H2O = 3-deoxy-alpha-D-manno-2-octulosonate-8-phosphate + phosphate. It participates in carbohydrate biosynthesis; 3-deoxy-D-manno-octulosonate biosynthesis; 3-deoxy-D-manno-octulosonate from D-ribulose 5-phosphate: step 2/3. The protein operates within bacterial outer membrane biogenesis; lipopolysaccharide biosynthesis. The chain is 2-dehydro-3-deoxyphosphooctonate aldolase from Methylococcus capsulatus (strain ATCC 33009 / NCIMB 11132 / Bath).